Here is a 318-residue protein sequence, read N- to C-terminus: NADH-ubiquinone oxidoreductase chain 1 (318 aa).

A run of 8 helical transmembrane segments spans residues 2 to 22 (FLTN…FLTL), 70 to 90 (MFLM…IPLP), 102 to 122 (LLFM…SGWA), 147 to 167 (AIIL…TLII), 171 to 191 (YMWL…STLA), 222 to 242 (LFFL…TILF), 253 to 273 (ELYT…FLWI), and 294 to 314 (LPLT…TAAI).

Belongs to the complex I subunit 1 family.

Its subcellular location is the mitochondrion inner membrane. The enzyme catalyses a ubiquinone + NADH + 5 H(+)(in) = a ubiquinol + NAD(+) + 4 H(+)(out). Functionally, core subunit of the mitochondrial membrane respiratory chain NADH dehydrogenase (Complex I) that is believed to belong to the minimal assembly required for catalysis. Complex I functions in the transfer of electrons from NADH to the respiratory chain. The immediate electron acceptor for the enzyme is believed to be ubiquinone. This chain is NADH-ubiquinone oxidoreductase chain 1 (MT-ND1), found in Diaemus youngi (White-winged vampire bat).